The chain runs to 211 residues: MRPEVGREPAALQPRQRPRSDHQLHRSPFTVPPRTPACRSPGPSPPIAVALEVKPQLEDAIGKLAAEAVAVRVFPLAVDDLESDVLVGRPRVEAQDGEILVVGAGLQEVLGRGALVDEVGVEDVELVSLHDLGRWVVKVVVRLVVLVPLEARVHAVEEARLAWPVLVGPQDGGCPGSARTAAGKSFHHLWPQGQWASKPRMNEGTPQCACR.

Residues 1 to 43 form a disordered region; that stretch reads MRPEVGREPAALQPRQRPRSDHQLHRSPFTVPPRTPACRSPGP.

This is an uncharacterized protein from Homo sapiens (Human).